The primary structure comprises 580 residues: N(6)-adenosine-methyltransferase catalytic subunit METTL3 (580 aa).

The disordered stretch occupies residues 1–70; the sequence is MSDTWSSIQA…PKPSTASAVP (70 aa). An N-acetylserine; alternate modification is found at Ser2. Ser2 carries the post-translational modification Phosphoserine; alternate. The segment covering 28–37 has biased composition (basic and acidic residues); the sequence is QDSGHLDLRN. A phosphoserine mark is found at Ser43, Ser48, and Ser50. Residues Lys177, Lys211, Lys212, and Lys215 each participate in a glycyl lysine isopeptide (Lys-Gly) (interchain with G-Cter in SUMO1) cross-link. A disordered region spans residues 198-219; the sequence is LNSSASEPAKEPAKKSRKHAAS. The Nuclear localization signal signature appears at 210–215; the sequence is AKKSRK. 2 positions are modified to phosphoserine: Ser219 and Ser243. Thr348 carries the post-translational modification Phosphothreonine. Ser350 carries the phosphoserine modification. S-adenosyl-L-methionine-binding positions include 377–378 and Asp395; that span reads DI. The segment at 396-410 is gate loop 1; the sequence is PPWDIHMELPYGTLT. Interaction with METTL14 stretches follow at residues 450-454 and 464-480; these read ERVDE and QRII…NHGK. Residues 462 to 479 are interphase loop; that stretch reads QLQRIIRTGRTGHWLNHG. A positively charged region required for RNA-binding region spans residues 465–478; sequence RIIRTGRTGHWLNH. The segment at 507–515 is gate loop 2; sequence VRSTSHKPD. S-adenosyl-L-methionine is bound by residues Lys513, 536-539, and 549-550; these read RPHN and NQ.

It belongs to the MT-A70-like family. As to quaternary structure, heterodimer; heterodimerizes with METTL14 to form an antiparallel heterodimer that constitutes an active methyltransferase. Component of the WMM complex, a N6-methyltransferase complex composed of a catalytic subcomplex, named MAC, and of an associated subcomplex, named MACOM. The MAC subcomplex is composed of METTL3 and METTL14. The MACOM subcomplex is composed of WTAP, ZC3H13, CBLL1/HAKAI, VIRMA, and, in some cases of RBM15 (RBM15 or RBM15B). Interacts with NCBP1/CBP80. Interacts with EIF4E. Interacts with EIF3B. Sumoylation inhibits the N6-adenosine-methyltransferase activity. Sumoylation does not affect subcellular location or interaction with METTL14. Desumoylated by SENP1. In terms of tissue distribution, widely expressed at low level. Expressed in spleen, thymus, prostate, testis, ovary, small intestine, colon and peripheral blood leukocytes.

The protein resides in the nucleus. Its subcellular location is the nucleus speckle. It localises to the cytoplasm. It catalyses the reaction an adenosine in mRNA + S-adenosyl-L-methionine = an N(6)-methyladenosine in mRNA + S-adenosyl-L-homocysteine + H(+). Methyltransferase activity is regulated by miRNAs via a sequence pairing mechanism. Methyltransferase activity is inhibited by sumoylation. Its function is as follows. The METTL3-METTL14 heterodimer forms a N6-methyltransferase complex that methylates adenosine residues at the N(6) position of some RNAs and regulates various processes such as the circadian clock, differentiation of embryonic and hematopoietic stem cells, cortical neurogenesis, response to DNA damage, differentiation of T-cells and primary miRNA processing. In the heterodimer formed with METTL14, METTL3 constitutes the catalytic core. N6-methyladenosine (m6A), which takes place at the 5'-[AG]GAC-3' consensus sites of some mRNAs, plays a role in mRNA stability, processing, translation efficiency and editing. M6A acts as a key regulator of mRNA stability: methylation is completed upon the release of mRNA into the nucleoplasm and promotes mRNA destabilization and degradation. In embryonic stem cells (ESCs), m6A methylation of mRNAs encoding key naive pluripotency-promoting transcripts results in transcript destabilization, promoting differentiation of ESCs. M6A regulates the length of the circadian clock: acts as an early pace-setter in the circadian loop by putting mRNA production on a fast-track for facilitating nuclear processing, thereby providing an early point of control in setting the dynamics of the feedback loop. M6A also regulates circadian regulation of hepatic lipid metabolism. M6A regulates spermatogonial differentiation and meiosis and is essential for male fertility and spermatogenesis. Also required for oogenesis. Involved in the response to DNA damage: in response to ultraviolet irradiation, METTL3 rapidly catalyzes the formation of m6A on poly(A) transcripts at DNA damage sites, leading to the recruitment of POLK to DNA damage sites. M6A is also required for T-cell homeostasis and differentiation: m6A methylation of transcripts of SOCS family members (SOCS1, SOCS3 and CISH) in naive T-cells promotes mRNA destabilization and degradation, promoting T-cell differentiation. Inhibits the type I interferon response by mediating m6A methylation of IFNB. M6A also takes place in other RNA molecules, such as primary miRNA (pri-miRNAs). Mediates m6A methylation of Xist RNA, thereby participating in random X inactivation: m6A methylation of Xist leads to target YTHDC1 reader on Xist and promote transcription repression activity of Xist. M6A also regulates cortical neurogenesis: m6A methylation of transcripts related to transcription factors, neural stem cells, the cell cycle and neuronal differentiation during brain development promotes their destabilization and decay, promoting differentiation of radial glial cells. METTL3 mediates methylation of pri-miRNAs, marking them for recognition and processing by DGCR8. Acts as a positive regulator of mRNA translation independently of the methyltransferase activity: promotes translation by interacting with the translation initiation machinery in the cytoplasm. Its overexpression in a number of cancer cells suggests that it may participate in cancer cell proliferation by promoting mRNA translation. During human coronavirus SARS-CoV-2 infection, adds m6A modifications in SARS-CoV-2 RNA leading to decreased RIGI binding and subsequently dampening the sensing and activation of innate immune responses. This chain is N(6)-adenosine-methyltransferase catalytic subunit METTL3, found in Homo sapiens (Human).